Reading from the N-terminus, the 141-residue chain is Nucleoside diphosphate kinase (141 aa).

ATP is bound by residues lysine 9, phenylalanine 57, arginine 85, threonine 91, arginine 102, and asparagine 112. The active-site Pros-phosphohistidine intermediate is histidine 115.

This sequence belongs to the NDK family. Homotetramer. Mg(2+) serves as cofactor.

It is found in the cytoplasm. The enzyme catalyses a 2'-deoxyribonucleoside 5'-diphosphate + ATP = a 2'-deoxyribonucleoside 5'-triphosphate + ADP. It carries out the reaction a ribonucleoside 5'-diphosphate + ATP = a ribonucleoside 5'-triphosphate + ADP. Its function is as follows. Major role in the synthesis of nucleoside triphosphates other than ATP. The ATP gamma phosphate is transferred to the NDP beta phosphate via a ping-pong mechanism, using a phosphorylated active-site intermediate. The protein is Nucleoside diphosphate kinase of Chlamydia caviae (strain ATCC VR-813 / DSM 19441 / 03DC25 / GPIC) (Chlamydophila caviae).